Consider the following 189-residue polypeptide: Movement protein p22 (189 aa).

The protein belongs to the tombusvirus/aureusvirus movement protein p22 family. Interacts with host protein HFI22. In terms of processing, phosphorylated.

The protein localises to the host membrane. In terms of biological role, cell-to-cell movement. Displays RNA-binding activity. This is Movement protein p22 from Capsicum annuum (Capsicum pepper).